A 54-amino-acid chain; its full sequence is Ovomucoid (54 aa).

Residues 4–54 (VDCSDYPKPVCTLDYMPLCGSDNKTYSNKCNFCNAVVDSNGTITLSHFGRC) form the Kazal-like domain. Disulfide bonds link cysteine 6–cysteine 36, cysteine 14–cysteine 33, and cysteine 22–cysteine 54. An N-linked (GlcNAc...) asparagine glycan is attached at asparagine 43.

The protein resides in the secreted. This is Ovomucoid from Coloeus monedula (Eurasian jackdaw).